Here is a 667-residue protein sequence, read N- to C-terminus: MAAETLLSSLLGLLLLGLLLPATLTGGVGSLNLEELSEMRYGIEILPLPVMGGQSQASDVVIVSSKYKQRYECRLPAGAIHFQREREEETPAYQGPGIPELLSPMKDAPCLLKTKDWWTYEFCYGRHIQQYHMEDSEIKGEVLYLGYYQSAFDWDDETAKASKQHRLKRYHSQTYGNGSKCDLNGRPREAEVRFLCDEGAGISGDYIDRVDEPLSCSYVLTIRTPRLCPHPLLRPPPSAAPQAILCHPALQPEEYMAYVQRQADSKQYGDRAIEGRQDPDPPVWSETKPGVVPPKKAGASPAKENSKESDFWKMLHEPEEQPPEKEETQAEEQEPNLEATDPPPTSPDDFQNNVQVKVIRSPADLIRLIEELKGGTRKGKPNTGQEQPGDSATEVPSREPEMKEKGDPEQQNEVEEEEDDEDEDEDEDERQLLGEFEKELEGILLPSDRERLRAEVKAGMERELENIIQETEKELDPDGLKKESERDRAILALTSTLNKLIKRLEEKQSPELMKKHRKRRVVPKKPPPSPQSTEEDPEHRVRVRVTKLRHGGPNQDLTVLEMKRENPQLKQIEGLVKDLLEREGLTAEGKIEIKIVRPGTEGTEEDARWLTDEDTKNLKEIFFNILVQGAEEAQKERQRQKELESNYRRVWGSPGGEGTGDLDEFDF.

The N-terminal stretch at 1–25 is a signal peptide; that stretch reads MAAETLLSSLLGLLLLGLLLPATLT. Positions 108-230 constitute an MRH domain; sequence APCLLKTKDW…TIRTPRLCPH (123 aa). Cysteines 110 and 123 form a disulfide. A mannooligosaccharide derivative contacts are provided by Trp-117, Trp-118, and Gln-130. N-linked (GlcNAc...) asparagine glycosylation is present at Asn-177. 2 disulfide bridges follow: Cys-181/Cys-216 and Cys-196/Cys-228. A mannooligosaccharide derivative is bound by residues Asp-182, Arg-188, Glu-212, and Tyr-218. 3 disordered regions span residues 262-450, 506-541, and 636-667; these read QADS…SDRE, EKQS…EHRV, and ERQR…EFDF. 3 stretches are compositionally biased toward basic and acidic residues: residues 263–279, 304–328, and 396–408; these read ADSK…RQDP, ENSK…KEET, and PSRE…KGDP. Residues 410–429 show a composition bias toward acidic residues; sequence QQNEVEEEEDDEDEDEDEDE. Positions 430–450 are enriched in basic and acidic residues; that stretch reads RQLLGEFEKELEGILLPSDRE. Positions 514–523 are enriched in basic residues; it reads KKHRKRRVVP. The span at 636–647 shows a compositional bias: basic and acidic residues; the sequence is ERQRQKELESNY.

The protein belongs to the OS-9 family. Component of the HRD1 complex, which comprises at least SYNV1/HRD1, DERL1/2, FAM8A1, HERPUD1/HERP, OS9, SEL1L and UBE2J1. FAM8A1 is stabilized by interaction with SYNV1, which prevents its proteasomal degradation. OS9 and UBE2J1 recruitment to the complex may be mediated by SEL1L. Through this complex, may interact with ERLEC1 and HSPA5. Interacts (via C-terminus) with CPNE6 (via second C2 domain); this interaction occurs in a calcium-dependent manner in vitro. Interacts with CREB3. Intramolecular disulfide bonds.

It localises to the endoplasmic reticulum lumen. Its function is as follows. Lectin component of the HRD1 complex, which functions in endoplasmic reticulum (ER) quality control and ER-associated degradation (ERAD). Specifically recognizes and binds improperly folded glycoproteins as well as hyperglycosylated proteins, retain them in the ER, and transfers them to the ubiquitination machinery and promote their degradation. Possible targets include TRPV4 as well as hyperglycosylated HSP90B1. The polypeptide is Protein OS-9 (OS9) (Bos taurus (Bovine)).